The following is a 235-amino-acid chain: DDCIVVEYYIVTDSAFTKRFKSNSALTNYVTVMFTGVQNLMDTLELGIGVRLLGVTTFTEKTEPSFIKDNLIPGPPAAFDPDVLISAMSKYYCNHQTGLAKDTDLIFLITARGMGDPREDGTVDINTAGIANSAGVCKPCFKSGIATDDSDYNERVDTLAHESVHLLGSPHDGEGPNLVSLEGSPGAANCPAKAGYIMGNRNDKNKYKFSPCTKKCVEYLLSKPTASCIFQQCRD.

A Peptidase M12B domain is found at 4–233 (IVVEYYIVTD…PTASCIFQQC (230 aa)). A disulfide bond links C137 and C228. H161 is a binding site for Zn(2+). Residue E162 is part of the active site. Positions 165 and 171 each coordinate Zn(2+).

It belongs to the venom metalloproteinase (M12B) family. Zn(2+) serves as cofactor. As to expression, expressed by the venom gland.

It localises to the secreted. With respect to regulation, inhibited by EDTA. Functionally, acts as a metalloprotease. Penetrates intact tissue and specifically cleaves the vesicle-associated membrane protein 2 (VAMP2) (part of the SNARE complex) involved in pancreatic secretion, thus disrupting the normal vesicular traffic. This chain is Venom metalloproteinase antarease-like TserMP_B, found in Tityus serrulatus (Brazilian scorpion).